A 202-amino-acid polypeptide reads, in one-letter code: ADP-ribosylation factor-like protein 15 (202 aa).

GTP-binding positions include 39 to 46, 82 to 86, and 142 to 145; these read GLTGSGKT, ELGGA, and NHQD.

This sequence belongs to the small GTPase superfamily. Arf family.

The protein is ADP-ribosylation factor-like protein 15 (ARL15) of Bos taurus (Bovine).